Here is a 227-residue protein sequence, read N- to C-terminus: Cytochrome c oxidase subunit 2 (227 aa).

Residues 1-14 (MAYPFQLGLQDATS) are Mitochondrial intermembrane-facing. A helical membrane pass occupies residues 15–45 (PIMEELANFHDHTLMIVFLISSLVLYIISSM). The Mitochondrial matrix segment spans residues 46–59 (LTTKLTHTSTMDAQ). The helical transmembrane segment at 60–87 (EVETIWTILPAVILILIALPSLRILYMM) threads the bilayer. The Mitochondrial intermembrane segment spans residues 88-227 (DEINNPALTV…HFENWSASMI (140 aa)). Residues His-161, Cys-196, Glu-198, Cys-200, His-204, and Met-207 each coordinate Cu cation. Residue Glu-198 participates in Mg(2+) binding.

The protein belongs to the cytochrome c oxidase subunit 2 family. As to quaternary structure, component of the cytochrome c oxidase (complex IV, CIV), a multisubunit enzyme composed of 14 subunits. The complex is composed of a catalytic core of 3 subunits MT-CO1, MT-CO2 and MT-CO3, encoded in the mitochondrial DNA, and 11 supernumerary subunits COX4I, COX5A, COX5B, COX6A, COX6B, COX6C, COX7A, COX7B, COX7C, COX8 and NDUFA4, which are encoded in the nuclear genome. The complex exists as a monomer or a dimer and forms supercomplexes (SCs) in the inner mitochondrial membrane with NADH-ubiquinone oxidoreductase (complex I, CI) and ubiquinol-cytochrome c oxidoreductase (cytochrome b-c1 complex, complex III, CIII), resulting in different assemblies (supercomplex SCI(1)III(2)IV(1) and megacomplex MCI(2)III(2)IV(2)). Found in a complex with TMEM177, COA6, COX18, COX20, SCO1 and SCO2. Interacts with TMEM177 in a COX20-dependent manner. Interacts with COX20. Interacts with COX16. The cofactor is Cu cation.

Its subcellular location is the mitochondrion inner membrane. It carries out the reaction 4 Fe(II)-[cytochrome c] + O2 + 8 H(+)(in) = 4 Fe(III)-[cytochrome c] + 2 H2O + 4 H(+)(out). Component of the cytochrome c oxidase, the last enzyme in the mitochondrial electron transport chain which drives oxidative phosphorylation. The respiratory chain contains 3 multisubunit complexes succinate dehydrogenase (complex II, CII), ubiquinol-cytochrome c oxidoreductase (cytochrome b-c1 complex, complex III, CIII) and cytochrome c oxidase (complex IV, CIV), that cooperate to transfer electrons derived from NADH and succinate to molecular oxygen, creating an electrochemical gradient over the inner membrane that drives transmembrane transport and the ATP synthase. Cytochrome c oxidase is the component of the respiratory chain that catalyzes the reduction of oxygen to water. Electrons originating from reduced cytochrome c in the intermembrane space (IMS) are transferred via the dinuclear copper A center (CU(A)) of subunit 2 and heme A of subunit 1 to the active site in subunit 1, a binuclear center (BNC) formed by heme A3 and copper B (CU(B)). The BNC reduces molecular oxygen to 2 water molecules using 4 electrons from cytochrome c in the IMS and 4 protons from the mitochondrial matrix. The sequence is that of Cytochrome c oxidase subunit 2 (MT-CO2) from Malacomys longipes (Big-eared swamp rat).